The primary structure comprises 344 residues: tRNA N6-adenosine threonylcarbamoyltransferase (344 aa).

Positions 111 and 115 each coordinate Fe cation. Substrate contacts are provided by residues 134-138 (LVSGG), Asp167, Gly180, Asp184, and Asn277. Asp305 serves as a coordination point for Fe cation.

Belongs to the KAE1 / TsaD family. Fe(2+) serves as cofactor.

It is found in the cytoplasm. It catalyses the reaction L-threonylcarbamoyladenylate + adenosine(37) in tRNA = N(6)-L-threonylcarbamoyladenosine(37) in tRNA + AMP + H(+). Functionally, required for the formation of a threonylcarbamoyl group on adenosine at position 37 (t(6)A37) in tRNAs that read codons beginning with adenine. Is involved in the transfer of the threonylcarbamoyl moiety of threonylcarbamoyl-AMP (TC-AMP) to the N6 group of A37, together with TsaE and TsaB. TsaD likely plays a direct catalytic role in this reaction. The chain is tRNA N6-adenosine threonylcarbamoyltransferase from Microcystis aeruginosa (strain NIES-843 / IAM M-2473).